Consider the following 142-residue polypeptide: MKTFTAKPETVKRDWYVVDATGKTLGRLATELARRLRGKHKAEYTPHVDTGDYIIVLNADKVAVTGNKCTDKVYYHHTGHIGGIKQATFEEMIARRPERVIEIAVKGMLPKGPLGRAMFRKLKVYAGNEHNHAAQQPQVLDI.

Belongs to the universal ribosomal protein uL13 family. Part of the 50S ribosomal subunit.

In terms of biological role, this protein is one of the early assembly proteins of the 50S ribosomal subunit, although it is not seen to bind rRNA by itself. It is important during the early stages of 50S assembly. This chain is Large ribosomal subunit protein uL13, found in Shigella boydii serotype 18 (strain CDC 3083-94 / BS512).